A 445-amino-acid chain; its full sequence is Phosphoglucosamine mutase (445 aa).

The active-site Phosphoserine intermediate is S102. 4 residues coordinate Mg(2+): S102, D241, D243, and D245. Residue S102 is modified to Phosphoserine.

Belongs to the phosphohexose mutase family. Requires Mg(2+) as cofactor. Post-translationally, activated by phosphorylation.

It carries out the reaction alpha-D-glucosamine 1-phosphate = D-glucosamine 6-phosphate. Its function is as follows. Catalyzes the conversion of glucosamine-6-phosphate to glucosamine-1-phosphate. The chain is Phosphoglucosamine mutase from Pectobacterium carotovorum subsp. carotovorum (strain PC1).